The sequence spans 313 residues: Olfactory receptor 5D18 (313 aa).

At 1–26 (MLLTDRNTSGTTFTLLGFSDYPELQV) the chain is on the extracellular side. N7 carries an N-linked (GlcNAc...) asparagine glycan. A helical membrane pass occupies residues 27–47 (PLFLVFLAIYNVTVLGNIGLI). Residues 48–55 (VIIKINPK) are Cytoplasmic-facing. The chain crosses the membrane as a helical span at residues 56-76 (LHTPMYFFLSQLSFVDFCYSS). Over 77–100 (IIAPKMLVNLVVKDRTISFLGCVV) the chain is Extracellular. C98 and C190 form a disulfide bridge. The helical transmembrane segment at 101 to 121 (QFFFFCTFVVTESFLLAVMAY) threads the bilayer. Over 122-140 (DRFVAICNPLLYTVNMSQK) the chain is Cytoplasmic. Residues 141-161 (LCVLLVVGSYAWGVSCSLELT) form a helical membrane-spanning segment. Over 162 to 197 (CSALKLCFHGFNTINHFFCEFSSLLSLSCSDTYINQ) the chain is Extracellular. A helical membrane pass occupies residues 198–218 (WLLFFLATFNEISTLLIVLTS). At 219-238 (YAFIVVTILKMRSVSGRRKA) the chain is on the cytoplasmic side. The chain crosses the membrane as a helical span at residues 239 to 259 (FSTCASHLTAITIFHGTILFL). Topologically, residues 260 to 272 (YCVPNSKNSRHTV) are extracellular. A helical membrane pass occupies residues 273-293 (KVASVFYTVVIPMLNPLIYSL). The Cytoplasmic segment spans residues 294–313 (RNKDVKDTVTEILDTKVFSY).

This sequence belongs to the G-protein coupled receptor 1 family.

It localises to the cell membrane. Functionally, odorant receptor. The polypeptide is Olfactory receptor 5D18 (OR5D18) (Homo sapiens (Human)).